We begin with the raw amino-acid sequence, 632 residues long: ATP-dependent zinc metalloprotease FtsH (632 aa).

Residues 1–9 are Cytoplasmic-facing; it reads MKPTNEPKK. Residues 10–30 form a helical membrane-spanning segment; that stretch reads PFFQSPIILAVLGGILLIFFL. Residues 31-116 lie on the Periplasmic side of the membrane; that stretch reads RSFNSDGSFS…INYSGFSESN (86 aa). Residues 117–137 traverse the membrane as a helical segment; the sequence is FFTDMLGWLMPILVILGLWMF. Residues 138–632 are Cytoplasmic-facing; sequence MANRMQKNMG…RLIPLEEQAS (495 aa). ATP contacts are provided by residues alanine 173, 213–217, and histidine 354; that span reads GTGKT. Residue histidine 434 participates in Zn(2+) binding. Residue glutamate 435 is part of the active site. Residues histidine 438 and aspartate 511 each contribute to the Zn(2+) site.

It in the central section; belongs to the AAA ATPase family. The protein in the C-terminal section; belongs to the peptidase M41 family. In terms of assembly, homohexamer. It depends on Zn(2+) as a cofactor.

It is found in the cell inner membrane. Its function is as follows. Acts as a processive, ATP-dependent zinc metallopeptidase for both cytoplasmic and membrane proteins. Plays a role in the quality control of integral membrane proteins. The protein is ATP-dependent zinc metalloprotease FtsH of Helicobacter pylori (strain ATCC 700392 / 26695) (Campylobacter pylori).